A 243-amino-acid chain; its full sequence is Ribonuclease PH (243 aa).

Phosphate is bound by residues Arg84 and Gly122–Arg124.

Belongs to the RNase PH family. Homohexameric ring arranged as a trimer of dimers.

The enzyme catalyses tRNA(n+1) + phosphate = tRNA(n) + a ribonucleoside 5'-diphosphate. In terms of biological role, phosphorolytic 3'-5' exoribonuclease that plays an important role in tRNA 3'-end maturation. Removes nucleotide residues following the 3'-CCA terminus of tRNAs; can also add nucleotides to the ends of RNA molecules by using nucleoside diphosphates as substrates, but this may not be physiologically important. Probably plays a role in initiation of 16S rRNA degradation (leading to ribosome degradation) during starvation. The chain is Ribonuclease PH from Bdellovibrio bacteriovorus (strain ATCC 15356 / DSM 50701 / NCIMB 9529 / HD100).